The following is a 328-amino-acid chain: Formyltetrahydrofolate deformylase 2, mitochondrial (328 aa).

The N-terminal 12 residues, 1–12, are a transit peptide targeting the mitochondrion; it reads MIRRVSTTSCLS. The region spanning 46 to 129 is the ACT domain; sequence FHVFHCPDVV…SVVRVPSLDP (84 aa). D272 is a catalytic residue.

It belongs to the PurU family. In terms of tissue distribution, expressed in leaves, cotyledons, roots, seeds and flowers.

It localises to the mitochondrion. The enzyme catalyses (6R)-10-formyltetrahydrofolate + H2O = (6S)-5,6,7,8-tetrahydrofolate + formate + H(+). Its function is as follows. Deformylase involved in photorespiration. Prevents excessive accumulation of 5-formyl tetrahydrofolate (THF), a potent inhibitor of the Gly decarboxylase/Ser hydroxymethyltransferase complex. This is Formyltetrahydrofolate deformylase 2, mitochondrial (PURU2) from Arabidopsis thaliana (Mouse-ear cress).